The chain runs to 259 residues: Cell division protein DivIB (259 aa).

Residues 1 to 27 (MADGKVIDIEQKVPDFREQRRRKSRRR) are Cytoplasmic-facing. A helical membrane pass occupies residues 28–45 (LVLYISILAFFLLFVYYF). Residues 46-259 (QSDYSTVGHV…QEEEEIEIEE (214 aa)) lie on the Extracellular side of the membrane. In terms of domain architecture, POTRA spans 50-118 (STVGHVDVYG…RSITLYVDEY (69 aa)).

It belongs to the FtsQ/DivIB family. DivIB subfamily.

The protein resides in the cell membrane. Functionally, cell division protein that may be involved in stabilizing or promoting the assembly of the division complex. In Bacillus selenitireducens (strain ATCC 700615 / DSM 15326 / MLS10), this protein is Cell division protein DivIB.